The chain runs to 496 residues: Xylulose kinase (496 aa).

83 to 84 (MH) provides a ligand contact to substrate. The Proton acceptor role is filled by D237.

Belongs to the FGGY kinase family.

It carries out the reaction D-xylulose + ATP = D-xylulose 5-phosphate + ADP + H(+). Functionally, catalyzes the phosphorylation of D-xylulose to D-xylulose 5-phosphate. The chain is Xylulose kinase from Staphylococcus epidermidis (strain ATCC 12228 / FDA PCI 1200).